The following is a 986-amino-acid chain: Isoleucine--tRNA ligase (986 aa).

Residues Glu534–Ser538 carry the 'KMSKS' region motif. An ATP-binding site is contributed by Lys537.

Belongs to the class-I aminoacyl-tRNA synthetase family. IleS type 2 subfamily. In terms of assembly, monomer. Requires Zn(2+) as cofactor.

The protein localises to the cytoplasm. The enzyme catalyses tRNA(Ile) + L-isoleucine + ATP = L-isoleucyl-tRNA(Ile) + AMP + diphosphate. Catalyzes the attachment of isoleucine to tRNA(Ile). As IleRS can inadvertently accommodate and process structurally similar amino acids such as valine, to avoid such errors it has two additional distinct tRNA(Ile)-dependent editing activities. One activity is designated as 'pretransfer' editing and involves the hydrolysis of activated Val-AMP. The other activity is designated 'posttransfer' editing and involves deacylation of mischarged Val-tRNA(Ile). This Saccharolobus solfataricus (strain ATCC 35092 / DSM 1617 / JCM 11322 / P2) (Sulfolobus solfataricus) protein is Isoleucine--tRNA ligase (ileS).